Reading from the N-terminus, the 786-residue chain is Progesterone receptor (786 aa).

Residues 1–10 show a composition bias toward basic and acidic residues; it reads MTEVKSKETR. 3 disordered regions span residues 1-95, 110-212, and 252-279; these read MTEV…SKDC, AAPW…ASPA, and SAFG…DGKE. Residues 1–420 form a modulating, Pro-Rich region; it reads MTEVKSKETR…YSFESLPQKI (420 aa). Residue Lys7 forms a Glycyl lysine isopeptide (Lys-Gly) (interchain with G-Cter in SUMO) linkage. Residues 48–79 show a composition bias toward acidic residues; that stretch reads DEEEEEEENEEEEEEEEPQQREEEEEEEEEDR. The segment covering 143–154 has biased composition (pro residues); the sequence is APGPSQPRPGAP. The segment covering 186 to 197 has biased composition (basic and acidic residues); it reads AEERGFPERDAG. Residues 203–212 are compositionally biased toward low complexity; sequence LAPAAAASPA. Ser210 and Ser259 each carry phosphoserine. Residue Lys294 forms a Glycyl lysine isopeptide (Lys-Gly) (interchain with G-Cter in SUMO); alternate linkage. Lys294 is covalently cross-linked (Glycyl lysine isopeptide (Lys-Gly) (interchain with G-Cter in ubiquitin); alternate). Residue Lys385 forms a Glycyl lysine isopeptide (Lys-Gly) (interchain with G-Cter in SUMO) linkage. 2 consecutive NR C4-type zinc fingers follow at residues 421-441 and 457-481; these read CLIC…CGSC and CAGR…LRKC. A DNA-binding region (nuclear receptor) is located at residues 421 to 486; that stretch reads CLICGDEASG…RLRKCCQAGM (66 aa). At Ser529 the chain carries Phosphoserine. The NR LBD domain occupies 532-766; that stretch reads QEIPFVPPMI…EFPEMMSEVI (235 aa).

The protein belongs to the nuclear hormone receptor family. NR3 subfamily. In terms of processing, phosphorylation of Ser-529 is sharply increased upon progesterone treatment, whereas phosphorylation of Ser-210 and Ser-259 is modestly induced by progesterone. Ubiquitinated. Ubiquitination is increased by progesterone and represses sumoylation at the same site. Post-translationally, sumoylation is hormone-dependent and represses transcriptional activity. Sumoylation on all three sites is enhanced by PIAS3. Desumoylated by SENP1. Sumoylation on Lys-385, the main site of sumoylation, is repressed by ubiquitination on the same site. Oviduct and bursa of Fabricius.

The protein resides in the nucleus. It localises to the cytoplasm. Its function is as follows. The steroid hormones and their receptors are involved in the regulation of eukaryotic gene expression and affect cellular proliferation and differentiation in target tissues. This chain is Progesterone receptor (PGR), found in Gallus gallus (Chicken).